The sequence spans 84 residues: Putative defensin-like protein 38 (84 aa).

The first 26 residues, 1 to 26, serve as a signal peptide directing secretion; the sequence is MASSKNGTVLFVSLMILLLISTGVKA. 4 cysteine pairs are disulfide-bonded: cysteine 28–cysteine 84, cysteine 41–cysteine 65, cysteine 50–cysteine 76, and cysteine 54–cysteine 78.

This sequence belongs to the DEFL family.

Its subcellular location is the secreted. The sequence is that of Putative defensin-like protein 38 from Arabidopsis thaliana (Mouse-ear cress).